The following is an 80-amino-acid chain: Small ribosomal subunit protein bS16 (80 aa).

The protein belongs to the bacterial ribosomal protein bS16 family.

This is Small ribosomal subunit protein bS16 from Laribacter hongkongensis (strain HLHK9).